Reading from the N-terminus, the 239-residue chain is tRNA (guanine-N(7)-)-methyltransferase (239 aa).

4 residues coordinate S-adenosyl-L-methionine: Glu-69, Glu-94, Asp-121, and Asp-144. Residue Asp-144 is part of the active site. Lys-148 contributes to the substrate binding site. Positions 150–155 (RHNKRR) are interaction with RNA. Residues Asp-180 and 217-220 (TKFE) each bind substrate.

The protein belongs to the class I-like SAM-binding methyltransferase superfamily. TrmB family. Monomer.

The enzyme catalyses guanosine(46) in tRNA + S-adenosyl-L-methionine = N(7)-methylguanosine(46) in tRNA + S-adenosyl-L-homocysteine. The protein operates within tRNA modification; N(7)-methylguanine-tRNA biosynthesis. In terms of biological role, catalyzes the formation of N(7)-methylguanine at position 46 (m7G46) in tRNA. In Salmonella paratyphi A (strain ATCC 9150 / SARB42), this protein is tRNA (guanine-N(7)-)-methyltransferase.